The following is a 466-amino-acid chain: MALNPDRLFSAEPGTREIARRLFASVEKLPIISPHGHTEPIWYARNEAFPDPASLFVKPDHYITRMLYSQGHSLESLGIASRDGRPSETDARKIWRLFATNWYLFRATPSRLWFEHAMETVFGITERLSQENADRIFDAIADQLTQPHMRPRALYDRFNIEAISTTDAATDPLIYHDEVIASGWHGRIIPAYRPDAAVDAGRPDFASEVEKLVGVAGTPLTWQGYLDAHRNRREYFKRRGATSSDHGHPTAQTADLSAGDASRLFDRVIKGNASTSDAEMFRAQMLTEMARMSIDDGLVMQIHPGSFRNHNPTVFERFGLDKGADIPRQTGFVDQLKPLLDAFGNDPRLTVILFTLDETALSRELAPLAGHYPALKLGPAWWFFDSPEGILRYRKLTTETAGFYNTVGFNDDTRAYLSIPARHDMARRVDCAYLAGLVADHRLEEDEAYEVAHDLAYRLAKQTYKL.

It belongs to the metallo-dependent hydrolases superfamily. Uronate isomerase family.

The enzyme catalyses D-glucuronate = D-fructuronate. It carries out the reaction aldehydo-D-galacturonate = keto-D-tagaturonate. The protein operates within carbohydrate metabolism; pentose and glucuronate interconversion. This chain is Uronate isomerase (uxaC), found in Brucella melitensis biotype 1 (strain ATCC 23456 / CCUG 17765 / NCTC 10094 / 16M).